We begin with the raw amino-acid sequence, 149 residues long: Calmodulin-2 (149 aa).

Alanine 2 is modified (N-acetylalanine). 4 EF-hand domains span residues 8 to 43 (EQIA…LGQN), 44 to 79 (PTEA…KMKD), 81 to 116 (DSEE…LGEK), and 117 to 149 (LTDE…MTSK). Ca(2+) is bound by residues aspartate 21, aspartate 23, aspartate 25, threonine 27, glutamate 32, aspartate 57, aspartate 59, asparagine 61, threonine 63, glutamate 68, aspartate 94, aspartate 96, asparagine 98, and glutamate 105. The residue at position 116 (lysine 116) is an N6,N6,N6-trimethyllysine. Ca(2+) is bound by residues aspartate 130, aspartate 132, aspartate 134, glutamine 136, and glutamate 141.

The protein belongs to the calmodulin family.

Its function is as follows. Calmodulin mediates the control of a large number of enzymes, ion channels and other proteins by Ca(2+). Among the enzymes to be stimulated by the calmodulin-Ca(2+) complex are a number of protein kinases and phosphatases. The chain is Calmodulin-2 (CAM2) from Branchiostoma lanceolatum (Common lancelet).